The following is a 1017-amino-acid chain: A-type ATP synthase subunit A (1017 aa).

The DOD-type homing endonuclease domain maps to 396 to 529 (FLGYLIADGT…FSYLLAKLGI (134 aa)).

Belongs to the ATPase alpha/beta chains family. In terms of assembly, has multiple subunits with at least A(3), B(3), C, D, E, F, H, I and proteolipid K(x). In terms of processing, this protein undergoes a protein self splicing that involves a post-translational excision of the VDE intervening region (intein) followed by peptide ligation.

Its subcellular location is the cell membrane. It catalyses the reaction ATP + H2O + 4 H(+)(in) = ADP + phosphate + 5 H(+)(out). Functionally, component of the A-type ATP synthase that produces ATP from ADP in the presence of a proton gradient across the membrane. The A chain is the catalytic subunit. The sequence is that of A-type ATP synthase subunit A from Pyrococcus abyssi (strain GE5 / Orsay).